The chain runs to 229 residues: 2-C-methyl-D-erythritol 4-phosphate cytidylyltransferase (229 aa).

The protein belongs to the IspD/TarI cytidylyltransferase family. IspD subfamily.

The catalysed reaction is 2-C-methyl-D-erythritol 4-phosphate + CTP + H(+) = 4-CDP-2-C-methyl-D-erythritol + diphosphate. It participates in isoprenoid biosynthesis; isopentenyl diphosphate biosynthesis via DXP pathway; isopentenyl diphosphate from 1-deoxy-D-xylulose 5-phosphate: step 2/6. In terms of biological role, catalyzes the formation of 4-diphosphocytidyl-2-C-methyl-D-erythritol from CTP and 2-C-methyl-D-erythritol 4-phosphate (MEP). This Neisseria meningitidis serogroup A / serotype 4A (strain DSM 15465 / Z2491) protein is 2-C-methyl-D-erythritol 4-phosphate cytidylyltransferase.